We begin with the raw amino-acid sequence, 119 residues long: MORF4 family associated protein 1 like 2 (119 aa).

The span at Met-1–Pro-16 shows a compositional bias: basic and acidic residues. Positions Met-1–Arg-36 are disordered.

Belongs to the MORF4 family-associated protein family. As to quaternary structure, may interact with CDK2AP1.

In terms of biological role, may play a role in cell proliferation. The chain is MORF4 family associated protein 1 like 2 from Homo sapiens (Human).